Consider the following 558-residue polypeptide: Dihydroxy-acid dehydratase (558 aa).

Cys49 lines the [2Fe-2S] cluster pocket. Asp81 serves as a coordination point for Mg(2+). Residue Cys122 coordinates [2Fe-2S] cluster. The Mg(2+) site is built by Asp123 and Lys124. Lys124 carries the N6-carboxylysine modification. Cys194 contacts [2Fe-2S] cluster. Glu446 contacts Mg(2+). The Proton acceptor role is filled by Ser472.

The protein belongs to the IlvD/Edd family. Homodimer. It depends on [2Fe-2S] cluster as a cofactor. The cofactor is Mg(2+).

The catalysed reaction is (2R)-2,3-dihydroxy-3-methylbutanoate = 3-methyl-2-oxobutanoate + H2O. The enzyme catalyses (2R,3R)-2,3-dihydroxy-3-methylpentanoate = (S)-3-methyl-2-oxopentanoate + H2O. It functions in the pathway amino-acid biosynthesis; L-isoleucine biosynthesis; L-isoleucine from 2-oxobutanoate: step 3/4. Its pathway is amino-acid biosynthesis; L-valine biosynthesis; L-valine from pyruvate: step 3/4. Its function is as follows. Functions in the biosynthesis of branched-chain amino acids. Catalyzes the dehydration of (2R,3R)-2,3-dihydroxy-3-methylpentanoate (2,3-dihydroxy-3-methylvalerate) into 2-oxo-3-methylpentanoate (2-oxo-3-methylvalerate) and of (2R)-2,3-dihydroxy-3-methylbutanoate (2,3-dihydroxyisovalerate) into 2-oxo-3-methylbutanoate (2-oxoisovalerate), the penultimate precursor to L-isoleucine and L-valine, respectively. The sequence is that of Dihydroxy-acid dehydratase from Synechococcus sp. (strain RCC307).